The chain runs to 354 residues: Stimulator of interferon genes protein 3 (354 aa).

4 helical membrane passes run 20 to 40, 48 to 68, 101 to 121, and 132 to 152; these read VTFASVVIAIISGALLVFALW, INFVFFATALLMLSVIIGELI, YGSCILAVGTTSVLFVCYALL, and YGIFFILNCFVIPQLVFIVGI. 8 residues coordinate 3',3'-cGAMP: Asn178, Tyr183, Arg250, Ile251, Lys253, Glu272, Ser275, and Asn276.

This sequence belongs to the STING family.

The protein localises to the membrane. Facilitator of innate immune signaling that acts as a sensor of second messenger signals produced by cyclic GMP-AMP synthase-like receptors (cGLRs) and promotes the production of type I interferon. Innate immune response is triggered in response to nucleotides from viruses and bacteria delivered to the cytoplasm. Acts by binding cyclic dinucleotides: recognizes and binds cyclic 3'-3' linked cGAMP (3'-3'-cGAMP), cyclic di-AMP (3',3'-c-di-AMP) and cyclic di-GMP (3',3'-c-di-GMP) second messengers produced by cGLRs in response to nucleotides in the cytosol, such as double-stranded RNA (dsRNA). Upon binding to 3'-3'-cGAMP, 3',3'-c-di-AMP or 3',3'-c-di-GMP, oligomerizes and promotes the recruitment and subsequent activation of the transcription factor IRF3 to induce expression of type I interferon. In Stylophora pistillata (Smooth cauliflower coral), this protein is Stimulator of interferon genes protein 3.